Here is a 382-residue protein sequence, read N- to C-terminus: 4-hydroxy-3-methylbut-2-en-1-yl diphosphate synthase (flavodoxin) (382 aa).

4 residues coordinate [4Fe-4S] cluster: Cys273, Cys276, Cys308, and Glu315.

This sequence belongs to the IspG family. [4Fe-4S] cluster serves as cofactor.

The catalysed reaction is (2E)-4-hydroxy-3-methylbut-2-enyl diphosphate + oxidized [flavodoxin] + H2O + 2 H(+) = 2-C-methyl-D-erythritol 2,4-cyclic diphosphate + reduced [flavodoxin]. The protein operates within isoprenoid biosynthesis; isopentenyl diphosphate biosynthesis via DXP pathway; isopentenyl diphosphate from 1-deoxy-D-xylulose 5-phosphate: step 5/6. In terms of biological role, converts 2C-methyl-D-erythritol 2,4-cyclodiphosphate (ME-2,4cPP) into 1-hydroxy-2-methyl-2-(E)-butenyl 4-diphosphate. The sequence is that of 4-hydroxy-3-methylbut-2-en-1-yl diphosphate synthase (flavodoxin) from Gluconacetobacter diazotrophicus (strain ATCC 49037 / DSM 5601 / CCUG 37298 / CIP 103539 / LMG 7603 / PAl5).